The sequence spans 979 residues: Glycine dehydrogenase (decarboxylating) (979 aa).

The residue at position 724 (K724) is an N6-(pyridoxal phosphate)lysine.

The protein belongs to the GcvP family. As to quaternary structure, the glycine cleavage system is composed of four proteins: P, T, L and H. Pyridoxal 5'-phosphate is required as a cofactor.

The enzyme catalyses N(6)-[(R)-lipoyl]-L-lysyl-[glycine-cleavage complex H protein] + glycine + H(+) = N(6)-[(R)-S(8)-aminomethyldihydrolipoyl]-L-lysyl-[glycine-cleavage complex H protein] + CO2. The glycine cleavage system catalyzes the degradation of glycine. The P protein binds the alpha-amino group of glycine through its pyridoxal phosphate cofactor; CO(2) is released and the remaining methylamine moiety is then transferred to the lipoamide cofactor of the H protein. The chain is Glycine dehydrogenase (decarboxylating) from Nostoc punctiforme (strain ATCC 29133 / PCC 73102).